A 307-amino-acid chain; its full sequence is Protein phosphatase EYA (307 aa).

The segment at 1-15 (MNNDTSKKLGTLVSD) is necessary for optimum phosphatase activity. Catalysis depends on D25, which acts as the Nucleophile. Residues D25, D27, and D253 each coordinate Mg(2+). Catalysis depends on D27, which acts as the Proton donor.

The protein belongs to the HAD-like hydrolase superfamily. EYA family. The cofactor is Mg(2+).

The catalysed reaction is O-phospho-L-tyrosyl-[protein] + H2O = L-tyrosyl-[protein] + phosphate. With respect to regulation, inhibited by EDTA. Functionally, possesses phosphatase activity toward para-nitrophenyl phosphate (pNPP) in vitro. Possesses phosphatase activity toward several phosphotyrosine-containing peptides in vitro, with low peptide substrate specificity. The protein is Protein phosphatase EYA of Arabidopsis thaliana (Mouse-ear cress).